The following is a 356-amino-acid chain: Holliday junction branch migration complex subunit RuvB (356 aa).

Residues 4 to 192 (DDTTDATADE…FGFTAHMEFY (189 aa)) are large ATPase domain (RuvB-L). ATP contacts are provided by residues Leu31, Arg32, Gly73, Lys76, Thr77, Thr78, 139–141 (EDF), Arg182, Tyr192, and Arg229. Thr77 contributes to the Mg(2+) binding site. The interval 193–263 (EPHELERVIH…IAAAALKVYE (71 aa)) is small ATPAse domain (RuvB-S). The tract at residues 266–356 (ARGLDRLDRG…GNGQGDLFGA (91 aa)) is head domain (RuvB-H). DNA is bound by residues Arg302, Arg321, and Arg326.

The protein belongs to the RuvB family. Homohexamer. Forms an RuvA(8)-RuvB(12)-Holliday junction (HJ) complex. HJ DNA is sandwiched between 2 RuvA tetramers; dsDNA enters through RuvA and exits via RuvB. An RuvB hexamer assembles on each DNA strand where it exits the tetramer. Each RuvB hexamer is contacted by two RuvA subunits (via domain III) on 2 adjacent RuvB subunits; this complex drives branch migration. In the full resolvosome a probable DNA-RuvA(4)-RuvB(12)-RuvC(2) complex forms which resolves the HJ.

It localises to the cytoplasm. The enzyme catalyses ATP + H2O = ADP + phosphate + H(+). The RuvA-RuvB-RuvC complex processes Holliday junction (HJ) DNA during genetic recombination and DNA repair, while the RuvA-RuvB complex plays an important role in the rescue of blocked DNA replication forks via replication fork reversal (RFR). RuvA specifically binds to HJ cruciform DNA, conferring on it an open structure. The RuvB hexamer acts as an ATP-dependent pump, pulling dsDNA into and through the RuvAB complex. RuvB forms 2 homohexamers on either side of HJ DNA bound by 1 or 2 RuvA tetramers; 4 subunits per hexamer contact DNA at a time. Coordinated motions by a converter formed by DNA-disengaged RuvB subunits stimulates ATP hydrolysis and nucleotide exchange. Immobilization of the converter enables RuvB to convert the ATP-contained energy into a lever motion, pulling 2 nucleotides of DNA out of the RuvA tetramer per ATP hydrolyzed, thus driving DNA branch migration. The RuvB motors rotate together with the DNA substrate, which together with the progressing nucleotide cycle form the mechanistic basis for DNA recombination by continuous HJ branch migration. Branch migration allows RuvC to scan DNA until it finds its consensus sequence, where it cleaves and resolves cruciform DNA. This chain is Holliday junction branch migration complex subunit RuvB, found in Streptomyces avermitilis (strain ATCC 31267 / DSM 46492 / JCM 5070 / NBRC 14893 / NCIMB 12804 / NRRL 8165 / MA-4680).